The chain runs to 551 residues: Endolytic murein transglycosylase (551 aa).

The Cytoplasmic portion of the chain corresponds to methionine 1–lysine 187. Residues valine 38–lysine 180 form a disordered region. 2 stretches are compositionally biased toward low complexity: residues proline 100–arginine 110 and glutamine 145–threonine 157. The segment covering aspartate 159–lysine 174 has biased composition (basic and acidic residues). The chain crosses the membrane as a helical span at residues alanine 188 to tyrosine 208. Over glutamine 209 to asparagine 551 the chain is Extracellular.

The protein belongs to the transglycosylase MltG family. As to quaternary structure, interacts with RodZ. Interacts with MreC in the elongasome; interaction is strongly reduced when the 90 C-terminal residues of MreC are missing. Interacts with KhpB (also called EloR/Jag) via MltG's N-terminus, suggesting the N-terminus of MltG is cytoplasmic.

It localises to the cell membrane. The enzyme catalyses a peptidoglycan chain = a peptidoglycan chain with N-acetyl-1,6-anhydromuramyl-[peptide] at the reducing end + a peptidoglycan chain with N-acetylglucosamine at the non-reducing end.. Functions as a peptidoglycan terminase that cleaves nascent peptidoglycan strands endolytically to terminate their elongation. Its function is as follows. Mutations in this gene suppress deletion of PBP2b (penA); truncation at residue 168, undefined changes between residue Ile-447 and Ala-505, and mutation of Ala-505 suppress the penA deletion. Probably part of the elongasome which synthesizes peripheral peptidoglycan. In Streptococcus pneumoniae (strain ATCC BAA-255 / R6), this protein is Endolytic murein transglycosylase.